Here is a 335-residue protein sequence, read N- to C-terminus: MSLQKCQEEWGELEKEFQQLQETHKVYKQKLEELSSLQNLCSSYINKHKRRLTELKGNLHGYKHTSNLEEKELIQQIDGTIKERHNAFFDMEAYLPKKNSLYLNLVLGNVNVTLLSKQTKFAYKDEYEKFKLYLTIILLLGAITCRFVLHYRVTDEVFNFLLVWYFCTLTIRESILISNGSRIKGWWVSHHYVSTFLSGVMLTWPDGLMYQMFRNQFLAFSIFQSCVQFLQYYYQSGCLYRLRALGERNHLHLTVEGFQSWMWRGLTFLLPVLFFGHFWQLYNAMTLFGLSRHEECKEWQVFVLALTFLLLFLGNFLTTLKVVHTKFQKNKLKKP.

Positions 1–39 form a coiled coil; the sequence is MSLQKCQEEWGELEKEFQQLQETHKVYKQKLEELSSLQN. The next 6 membrane-spanning stretches (helical) occupy residues 100-116, 130-150, 157-177, 193-213, 268-288, and 300-320; these read SLYL…TLLS, FKLY…FVLH, VFNF…SILI, VSTF…YQMF, FLLP…MTLF, and QVFV…LTTL.

Belongs to the TMEM120 family.

The protein localises to the nucleus inner membrane. Functionally, necessary for efficient adipogenesis. Does not show ion channel activity. This Xenopus laevis (African clawed frog) protein is Transmembrane protein 120B-B (tmem120b-b).